The sequence spans 484 residues: UDP-N-acetylmuramoyl-L-alanyl-D-glutamate--2,6-diaminopimelate ligase (484 aa).

110–116 (GTNGKTT) is an ATP binding site. Residues 152-153 (TT), Ser179, and Arg187 each bind UDP-N-acetyl-alpha-D-muramoyl-L-alanyl-D-glutamate. Lys219 is subject to N6-carboxylysine. Meso-2,6-diaminopimelate-binding positions include Arg381, 405–408 (DNPR), Gly455, and Glu459. A Meso-diaminopimelate recognition motif motif is present at residues 405 to 408 (DNPR).

The protein belongs to the MurCDEF family. MurE subfamily. Requires Mg(2+) as cofactor. In terms of processing, carboxylation is probably crucial for Mg(2+) binding and, consequently, for the gamma-phosphate positioning of ATP.

The protein resides in the cytoplasm. The enzyme catalyses UDP-N-acetyl-alpha-D-muramoyl-L-alanyl-D-glutamate + meso-2,6-diaminopimelate + ATP = UDP-N-acetyl-alpha-D-muramoyl-L-alanyl-gamma-D-glutamyl-meso-2,6-diaminopimelate + ADP + phosphate + H(+). It functions in the pathway cell wall biogenesis; peptidoglycan biosynthesis. Its function is as follows. Catalyzes the addition of meso-diaminopimelic acid to the nucleotide precursor UDP-N-acetylmuramoyl-L-alanyl-D-glutamate (UMAG) in the biosynthesis of bacterial cell-wall peptidoglycan. In Clostridium perfringens (strain 13 / Type A), this protein is UDP-N-acetylmuramoyl-L-alanyl-D-glutamate--2,6-diaminopimelate ligase.